A 384-amino-acid chain; its full sequence is S-adenosylmethionine synthase (384 aa).

His15 provides a ligand contact to ATP. Asp17 contributes to the Mg(2+) binding site. Glu43 is a K(+) binding site. Residues Glu56 and Gln99 each contribute to the L-methionine site. Residues 99-109 (QSPDINQGVDR) form a flexible loop region. ATP contacts are provided by residues 164-166 (DAK), 230-231 (RF), Asp239, 245-246 (RK), Ala262, and Lys266. An L-methionine-binding site is contributed by Asp239. Lys270 contacts L-methionine.

This sequence belongs to the AdoMet synthase family. Homotetramer; dimer of dimers. Mg(2+) is required as a cofactor. It depends on K(+) as a cofactor.

It localises to the cytoplasm. It catalyses the reaction L-methionine + ATP + H2O = S-adenosyl-L-methionine + phosphate + diphosphate. It participates in amino-acid biosynthesis; S-adenosyl-L-methionine biosynthesis; S-adenosyl-L-methionine from L-methionine: step 1/1. Its function is as follows. Catalyzes the formation of S-adenosylmethionine (AdoMet) from methionine and ATP. The overall synthetic reaction is composed of two sequential steps, AdoMet formation and the subsequent tripolyphosphate hydrolysis which occurs prior to release of AdoMet from the enzyme. This Serratia proteamaculans (strain 568) protein is S-adenosylmethionine synthase.